The chain runs to 1627 residues: DNA topoisomerase 2-beta (1627 aa).

ATP is bound by residues asparagine 117, asparagine 146, 174–176, and 187–194; these read SSN and GRNGYGAK. The segment at 368–370 is interaction with DNA; that stretch reads KKK. An ATP-binding site is contributed by 402 to 404; sequence QTK. Residues 481 to 598 form the Toprim domain; it reads CTLILTEGDS…SLLKHGFLEE (118 aa). Residues glutamate 487, aspartate 567, and aspartate 569 each coordinate Mg(2+). Residues 741 to 1194 form the Topo IIA-type catalytic domain; the sequence is IPSLVDGLKP…SASDLWKEDL (454 aa). Tyrosine 831 (O-(5'-phospho-DNA)-tyrosine intermediate) is an active-site residue. The tract at residues 1016–1025 is interaction with DNA; sequence KLQTSLTCNS. Disordered stretches follow at residues 1115–1144, 1224–1248, 1283–1365, and 1378–1627; these read AWKEAQEKAAEEEDPQNANDDASSASGSTS, KVGKPKMKKLQLEETMPSPFGRRIV, EFGG…DSLL, and DFSK…DMFN. The span at 1131–1144 shows a compositional bias: low complexity; it reads NANDDASSASGSTS. A compositionally biased stretch (polar residues) spans 1296–1305; the sequence is TVNTAASGTK. Positions 1339-1349 are enriched in basic and acidic residues; the sequence is PWSDDESKSES. Composition is skewed to acidic residues over residues 1381-1392 and 1412-1428; these read KEEDDAHDDDDA and REDEFVPSDSVEKDEYD. Basic and acidic residues-rich tracts occupy residues 1436-1448 and 1462-1471; these read PSPEKMSQEKKNQ and KTDDDTTKLD. Composition is skewed to basic residues over residues 1542 to 1552 and 1566 to 1578; these read GKGRGAKKRKT and KAPKSTPCKKSKK. The span at 1616–1627 shows a compositional bias: acidic residues; that stretch reads ESDEDDDFDMFN.

This sequence belongs to the type II topoisomerase family. As to quaternary structure, homodimer. Requires Mg(2+) as cofactor. Mn(2+) serves as cofactor. It depends on Ca(2+) as a cofactor.

Its subcellular location is the nucleus. The protein localises to the nucleolus. The protein resides in the nucleoplasm. It carries out the reaction ATP-dependent breakage, passage and rejoining of double-stranded DNA.. Functionally, key decatenating enzyme that alters DNA topology by binding to two double-stranded DNA molecules, generating a double-stranded break in one of the strands, passing the intact strand through the broken strand, and religating the broken strand. Plays a role in B-cell differentiation. The polypeptide is DNA topoisomerase 2-beta (TOP2B) (Gallus gallus (Chicken)).